The chain runs to 446 residues: Tubulin beta chain (446 aa).

GTP-binding residues include glutamine 11, glutamate 69, serine 138, glycine 142, threonine 143, glycine 144, asparagine 204, and asparagine 226. Position 69 (glutamate 69) interacts with Mg(2+). The tract at residues 423-446 is disordered; the sequence is QQYQDATADEEEGEYEEEPAEEEQ. Over residues 429–446 the composition is skewed to acidic residues; it reads TADEEEGEYEEEPAEEEQ.

The protein belongs to the tubulin family. In terms of assembly, dimer of alpha and beta chains. A typical microtubule is a hollow water-filled tube with an outer diameter of 25 nm and an inner diameter of 15 nM. Alpha-beta heterodimers associate head-to-tail to form protofilaments running lengthwise along the microtubule wall with the beta-tubulin subunit facing the microtubule plus end conferring a structural polarity. Microtubules usually have 13 protofilaments but different protofilament numbers can be found in some organisms and specialized cells. The cofactor is Mg(2+).

The protein localises to the cytoplasm. The protein resides in the cytoskeleton. Tubulin is the major constituent of microtubules, a cylinder consisting of laterally associated linear protofilaments composed of alpha- and beta-tubulin heterodimers. Microtubules grow by the addition of GTP-tubulin dimers to the microtubule end, where a stabilizing cap forms. Below the cap, tubulin dimers are in GDP-bound state, owing to GTPase activity of alpha-tubulin. This is Tubulin beta chain from Pleurotus sajor-caju (Oyster mushroom).